We begin with the raw amino-acid sequence, 492 residues long: NADPH:adrenodoxin oxidoreductase, mitochondrial (492 aa).

Residues 1–32 constitute a mitochondrion transit peptide; the sequence is MAPRCWRWWPWSSWTRTRLPPSRSIQNFGQHF. Ala-49, Glu-70, Leu-78, and Val-114 together coordinate FAD. NADP(+) is bound by residues 185-188, 229-230, and Glu-241; these read QGNV and RR. Phosphoserine is present on residues Ser-311 and Ser-318. Residues Trp-399 and 406–408 each bind FAD; that span reads GVI. An NADP(+)-binding site is contributed by Gly-406.

Belongs to the ferredoxin--NADP reductase type 1 family. In terms of assembly, monomer. Interacts directly with FDX1. FAD serves as cofactor. As to expression, detected in adrenal cortex and corpus luteum (at protein level).

The protein resides in the mitochondrion inner membrane. The enzyme catalyses 2 reduced [adrenodoxin] + NADP(+) + H(+) = 2 oxidized [adrenodoxin] + NADPH. The catalysed reaction is 2 reduced [2Fe-2S]-[ferredoxin] + NADP(+) + H(+) = 2 oxidized [2Fe-2S]-[ferredoxin] + NADPH. It functions in the pathway steroid metabolism; cholesterol metabolism. Functionally, serves as the first electron transfer protein in all the mitochondrial P450 systems including cholesterol side chain cleavage in all steroidogenic tissues, steroid 11-beta hydroxylation in the adrenal cortex, 25-OH-vitamin D3-24 hydroxylation in the kidney, and sterol C-27 hydroxylation in the liver. Also acts as a ferredoxin--NADP(+) reductase essential for coenzyme Q biosynthesis: together with FDX2, transfers the electrons required for the hydroxylation reaction performed by COQ6. This Bos taurus (Bovine) protein is NADPH:adrenodoxin oxidoreductase, mitochondrial (FDXR).